A 252-amino-acid chain; its full sequence is MFQPAPKRCFTIESLVAKDSPLPASRSEDPIRPAALSYANSSPINPFLNGFHSAAAAAAGRGVYSNPDLVFAEAVSHPPNPAVPVHPVPPPHALAAHPLPSSHSPHPLFASQQRDPSTFYPWLIHRYRYLGHRFQGNDTSPESFLLHNALARKPKRIRTAFSPSQLLRLEHAFEKNHYVVGAERKQLAHSLSLTETQVKVWFQNRRTKFKRQKLEEEGSDSQQKKKGTHHINRWRIATKQASPEEIDVTSDD.

Residues 154–213 constitute a DNA-binding region (homeobox); it reads PKRIRTAFSPSQLLRLEHAFEKNHYVVGAERKQLAHSLSLTETQVKVWFQNRRTKFKRQK. Residues 212–252 are disordered; sequence QKLEEEGSDSQQKKKGTHHINRWRIATKQASPEEIDVTSDD. The segment covering 224–233 has biased composition (basic residues); the sequence is KKKGTHHINR.

This sequence belongs to the EMX homeobox family. In terms of assembly, interacts with translation initiation factor EIF4E. As to expression, cerebral cortex.

Its subcellular location is the nucleus. It is found in the cell projection. The protein localises to the axon. Its function is as follows. Transcription factor, which in cooperation with EMX1, acts to generate the boundary between the roof and archipallium in the developing brain. May function in combination with OTX1/2 to specify cell fates in the developing central nervous system. In the inner ear, it controls the distribution of GPR156 at hair cell boundaries, and regulates the organization of stereociliary bundles in opposite orientations across the line of polarity reversal (LPR). The polypeptide is Homeobox protein EMX2 (EMX2) (Homo sapiens (Human)).